Reading from the N-terminus, the 99-residue chain is UPF0122 protein UU142 (99 aa).

Belongs to the UPF0122 family.

In terms of biological role, might take part in the signal recognition particle (SRP) pathway. This is inferred from the conservation of its genetic proximity to ftsY/ffh. May be a regulatory protein. The protein is UPF0122 protein UU142 of Ureaplasma parvum serovar 3 (strain ATCC 700970).